Consider the following 285-residue polypeptide: 1,4-dihydroxy-2-naphthoyl-CoA synthase (285 aa).

Substrate contacts are provided by residues Arg45, 84 to 88 (SGGDQ), Tyr97, 129 to 133 (YAIGG), Thr155, Ser161, Tyr258, and Lys273. 154 to 156 (QTG) serves as a coordination point for hydrogencarbonate.

Belongs to the enoyl-CoA hydratase/isomerase family. MenB subfamily. Hydrogencarbonate serves as cofactor.

It carries out the reaction 2-succinylbenzoyl-CoA + H(+) = 1,4-dihydroxy-2-naphthoyl-CoA + H2O. The protein operates within quinol/quinone metabolism; 1,4-dihydroxy-2-naphthoate biosynthesis; 1,4-dihydroxy-2-naphthoate from chorismate: step 6/7. It participates in quinol/quinone metabolism; menaquinone biosynthesis. In terms of biological role, converts o-succinylbenzoyl-CoA (OSB-CoA) to 1,4-dihydroxy-2-naphthoyl-CoA (DHNA-CoA). The chain is 1,4-dihydroxy-2-naphthoyl-CoA synthase from Haemophilus influenzae (strain ATCC 51907 / DSM 11121 / KW20 / Rd).